A 123-amino-acid polypeptide reads, in one-letter code: Polyadenylate-binding protein-interacting protein 2B (123 aa).

Met1 is subject to N-acetylmethionine. Polar residues predominate over residues 1–13 (MNGSNMANTSPSV). Disordered stretches follow at residues 1–30 (MNGSNMANTSPSVKSKEDQGLSGHDEKENP) and 91–123 (NGLSVSEGHDSEDILSKSNLNPDAKEFIPGEKY). Composition is skewed to basic and acidic residues over residues 14–30 (KSKEDQGLSGHDEKENP) and 113–123 (DAKEFIPGEKY).

The protein belongs to the PAIP2 family. In terms of assembly, interacts (via central acidic portion and C-terminus) with PABPC1 (via the second and third RRM domains and the C-terminus). In terms of processing, ubiquitinated in vitro. As to expression, expressed in brain, cervix, heart, liver, ovary, kidney, prostate and testis.

Its function is as follows. Inhibits translation of capped and polyadenylated mRNAs by displacing PABPC1 from the poly(A) tail. In Homo sapiens (Human), this protein is Polyadenylate-binding protein-interacting protein 2B (PAIP2B).